The sequence spans 187 residues: CASP-like protein 2C1 (187 aa).

Residues 1–14 (MVAAARVVSGVKAE) lie on the Cytoplasmic side of the membrane. A helical transmembrane segment spans residues 15–35 (GLLRGACAALAAAAALLLGLS). The Extracellular segment spans residues 36 to 54 (TQTETVLLVRKKGTVKDVQ). A helical membrane pass occupies residues 55–75 (ALWVLAMAAASAAGYHLLQLL). Residues 76–97 (KCLYLGRGGGRALAWTCLLLDK) are Cytoplasmic-facing. A helical transmembrane segment spans residues 98–118 (ACAYATFATTVAAAQACVVAL). Over 119 to 139 (DGAHALQWTKLCNIYTRFCEQ) the chain is Extracellular. Residues 140–160 (VAGSLVLGMLAAVGTAVLSAA) traverse the membrane as a helical segment. The Cytoplasmic segment spans residues 161 to 187 (SARNVFRHYYCSSHSPPAPPPETCDAH).

It belongs to the Casparian strip membrane proteins (CASP) family. Homodimer and heterodimers.

It localises to the cell membrane. This Zea mays (Maize) protein is CASP-like protein 2C1.